The following is a 491-amino-acid chain: Ran-binding protein 3 (491 aa).

Residues 1 to 10 are compositionally biased toward basic and acidic residues; it reads MADLANEEKP. Disordered regions lie at residues 1–177 and 255–292; these read MADL…HCEE and VLSP…KKES. At Ala-2 the chain carries N-acetylalanine. Lys-9 and Lys-21 each carry N6-acetyllysine. Phosphoserine occurs at positions 32, 33, and 40. The short motif at 49-57 is the Nuclear localization signal element; it reads PPVKRERTS. Residues 51 to 67 are compositionally biased toward basic and acidic residues; sequence VKRERTSSLTHSEEKSS. The residue at position 56 (Thr-56) is a Phosphothreonine. The residue at position 58 (Ser-58) is a Phosphoserine. 2 stretches are compositionally biased toward polar residues: residues 111-124 and 133-149; these read VLSQ…TNGV and PATS…SPSE. Ser-146 carries the phosphoserine modification. The segment covering 152–162 has biased composition (basic and acidic residues); that stretch reads EETHTLEEKVP. 4 positions are modified to phosphoserine: Ser-257, Ser-277, Ser-279, and Ser-296. Positions 275–286 are enriched in low complexity; that stretch reads AQSGSESSSQEA. The RanBD1 domain maps to 302-442; it reads KATAWTCLLE…LALRSRAEQE (141 aa). Positions 438–491 are disordered; it reads RAEQEQEAKAPPPEPGATRATEEEDSDEDAVLAPSGVTGAGTGDEGDGQAPGST. Ser-463 bears the Phosphoserine mark.

Interacts with CHC1 in a Ran-stimulated manner. Interacts with XPO1. Interacts (via its C-terminal R domain) with SMAD2 (dephosphorylated form via its MH1 and MH2 domains); the interaction results in the nuclear export of SMAD2 and termination of the TGF-beta signaling. Interacts (via its C-terminal R domain) with SMAD3 (dephosphorylated form via its MH1 domain); the interaction results in the nuclear export of SMAD3 and termination of the TGF-beta signaling. Post-translationally, phosphorylation at Ser-58 promotes its import into the nucleus.

The protein localises to the cytoplasm. Its subcellular location is the nucleus. Acts as a cofactor for XPO1/CRM1-mediated nuclear export, perhaps as export complex scaffolding protein. Bound to XPO1/CRM1, stabilizes the XPO1/CRM1-cargo interaction. In the absence of Ran-bound GTP prevents binding of XPO1/CRM1 to the nuclear pore complex. Binds to CHC1/RCC1 and increases the guanine nucleotide exchange activity of CHC1/RCC1. Recruits XPO1/CRM1 to CHC1/RCC1 in a Ran-dependent manner. Negative regulator of TGF-beta signaling through interaction with the R-SMAD proteins, SMAD2 and SMAD3, and mediating their nuclear export. This is Ran-binding protein 3 (Ranbp3) from Mus musculus (Mouse).